Reading from the N-terminus, the 59-residue chain is Bdellastasin (59 aa).

Disulfide bonds link cysteine 10-cysteine 21, cysteine 15-cysteine 26, cysteine 28-cysteine 48, cysteine 33-cysteine 52, and cysteine 37-cysteine 54. Positions cysteine 28–cysteine 54 constitute an Antistasin-like domain.

It localises to the secreted. Its function is as follows. Strong inhibitor of mammalian trypsin, plasmin and acrosin. The protein is Bdellastasin of Hirudo medicinalis (Medicinal leech).